Reading from the N-terminus, the 495-residue chain is Probable cytosol aminopeptidase (495 aa).

Lys258 and Asp263 together coordinate Mn(2+). Residue Lys270 is part of the active site. Mn(2+) is bound by residues Asp281, Asp340, and Glu342. Arg344 is a catalytic residue.

The protein belongs to the peptidase M17 family. Requires Mn(2+) as cofactor.

It is found in the cytoplasm. It catalyses the reaction Release of an N-terminal amino acid, Xaa-|-Yaa-, in which Xaa is preferably Leu, but may be other amino acids including Pro although not Arg or Lys, and Yaa may be Pro. Amino acid amides and methyl esters are also readily hydrolyzed, but rates on arylamides are exceedingly low.. The enzyme catalyses Release of an N-terminal amino acid, preferentially leucine, but not glutamic or aspartic acids.. Functionally, presumably involved in the processing and regular turnover of intracellular proteins. Catalyzes the removal of unsubstituted N-terminal amino acids from various peptides. In Leptospira interrogans serogroup Icterohaemorrhagiae serovar Lai (strain 56601), this protein is Probable cytosol aminopeptidase.